The following is a 244-amino-acid chain: U4/U6.U5 tri-snRNP-associated protein 3-like protein C162.01c (244 aa).

Basic and acidic residues-rich tracts occupy residues 1–11 (MSSSRSGEHRR) and 20–116 (ESSR…RRDG). 2 disordered regions span residues 1–192 (MSSS…EDEA) and 223–244 (KKTK…LDNE). Phosphoserine is present on residues S121 and S140. A compositionally biased stretch (basic and acidic residues) spans 126–182 (GLERKREHEKLQAPSPKEEEERPVDQGDKMDGVKEDKDGSLEVGKSHDAMTRTKSAE). The segment covering 183 to 192 (EEIVEQEDEA) has biased composition (acidic residues).

It belongs to the SNUT3 family. Part of a tri-snRNP complex.

It is found in the nucleus. In terms of biological role, may play a role in mRNA splicing. The protein is U4/U6.U5 tri-snRNP-associated protein 3-like protein C162.01c of Schizosaccharomyces pombe (strain 972 / ATCC 24843) (Fission yeast).